We begin with the raw amino-acid sequence, 170 residues long: uncharacterized protein (170 aa).

Helical transmembrane passes span 6 to 26 (PFYFYIGMALILASIVSILLI), 31 to 51 (LLFILLAFGSLVGITLILIYI), and 91 to 111 (IYFSGTFYNSAVLFFIFIVAF).

This sequence to M.jannaschii MJ1249.1, MJ0210.1 and MJ0785.1.

It is found in the cell membrane. This is an uncharacterized protein from Methanocaldococcus jannaschii (strain ATCC 43067 / DSM 2661 / JAL-1 / JCM 10045 / NBRC 100440) (Methanococcus jannaschii).